The following is a 239-amino-acid chain: 6-phosphogluconolactonase (239 aa).

Belongs to the glucosamine/galactosamine-6-phosphate isomerase family. 6-phosphogluconolactonase subfamily.

The catalysed reaction is 6-phospho-D-glucono-1,5-lactone + H2O = 6-phospho-D-gluconate + H(+). The protein operates within carbohydrate degradation; pentose phosphate pathway; D-ribulose 5-phosphate from D-glucose 6-phosphate (oxidative stage): step 2/3. Its function is as follows. Hydrolysis of 6-phosphogluconolactone to 6-phosphogluconate. In Xylella fastidiosa (strain 9a5c), this protein is 6-phosphogluconolactonase (pgl).